Here is a 239-residue protein sequence, read N- to C-terminus: Glucosamine-6-phosphate deaminase (239 aa).

D62 acts as the Proton acceptor; for enolization step in catalysis. N128 serves as the catalytic For ring-opening step. H130 acts as the Proton acceptor; for ring-opening step in catalysis. E135 acts as the For ring-opening step in catalysis.

Belongs to the glucosamine/galactosamine-6-phosphate isomerase family. NagB subfamily.

It carries out the reaction alpha-D-glucosamine 6-phosphate + H2O = beta-D-fructose 6-phosphate + NH4(+). It participates in amino-sugar metabolism; N-acetylneuraminate degradation; D-fructose 6-phosphate from N-acetylneuraminate: step 5/5. In terms of biological role, catalyzes the reversible isomerization-deamination of glucosamine 6-phosphate (GlcN6P) to form fructose 6-phosphate (Fru6P) and ammonium ion. The chain is Glucosamine-6-phosphate deaminase from Lactobacillus johnsonii (strain CNCM I-12250 / La1 / NCC 533).